A 237-amino-acid polypeptide reads, in one-letter code: NAD-dependent protein deacetylase (237 aa).

Residues 1–237 enclose the Deacetylase sirtuin-type domain; that stretch reads MLTTWLTEAK…LEETNRALQA (237 aa). NAD(+) is bound by residues A18, T22, F29, R30, Q95, D98, and H113. Position 29 (F29) interacts with nicotinamide. Residue D98 coordinates nicotinamide. Residue H113 is the Proton acceptor of the active site. Zn(2+) is bound by residues C121, C124, C140, and C142. The NAD(+) site is built by S180, S181, N205, and I224.

The protein belongs to the sirtuin family. Class U subfamily. Requires Zn(2+) as cofactor.

The protein resides in the cytoplasm. The enzyme catalyses N(6)-acetyl-L-lysyl-[protein] + NAD(+) + H2O = 2''-O-acetyl-ADP-D-ribose + nicotinamide + L-lysyl-[protein]. Functionally, NAD-dependent protein deacetylase which modulates the activities of several enzymes which are inactive in their acetylated form. The protein is NAD-dependent protein deacetylase of Halalkalibacterium halodurans (strain ATCC BAA-125 / DSM 18197 / FERM 7344 / JCM 9153 / C-125) (Bacillus halodurans).